The chain runs to 450 residues: Ribosomal protein uS12 methylthiotransferase RimO (450 aa).

In terms of domain architecture, MTTase N-terminal spans 9–124 (NRINVVTLGC…LLSALEADYK (116 aa)). 6 residues coordinate [4Fe-4S] cluster: C18, C53, C87, C148, C152, and C155. A Radical SAM core domain is found at 134 to 365 (TTPKNYAYLK…EIQSQISWEL (232 aa)). Residues 367–434 (QQKIGEVFNV…DFDLYGEPLN (68 aa)) form the TRAM domain.

It belongs to the methylthiotransferase family. RimO subfamily. The cofactor is [4Fe-4S] cluster.

The protein localises to the cytoplasm. The enzyme catalyses L-aspartate(89)-[ribosomal protein uS12]-hydrogen + (sulfur carrier)-SH + AH2 + 2 S-adenosyl-L-methionine = 3-methylsulfanyl-L-aspartate(89)-[ribosomal protein uS12]-hydrogen + (sulfur carrier)-H + 5'-deoxyadenosine + L-methionine + A + S-adenosyl-L-homocysteine + 2 H(+). In terms of biological role, catalyzes the methylthiolation of an aspartic acid residue of ribosomal protein uS12. The chain is Ribosomal protein uS12 methylthiotransferase RimO from Christiangramia forsetii (strain DSM 17595 / CGMCC 1.15422 / KT0803) (Gramella forsetii).